The sequence spans 353 residues: Ribosome biogenesis protein BRX1 homolog (353 aa).

Residues 1–10 are compositionally biased toward basic residues; it reads MAATKRKRRG. The tract at residues 1-46 is disordered; that stretch reads MAATKRKRRGGLAVQAKKLKRDAKDGKLPAKANDVSEEAAEEEKDR. The Brix domain occupies 60-249; it reads ERILIFSSRG…LIKIFQGSFG (190 aa). Residue Lys160 forms a Glycyl lysine isopeptide (Lys-Gly) (interchain with G-Cter in SUMO2) linkage. Residue Ser261 is modified to Phosphoserine. Lys276 is subject to N6-acetyllysine. Glycyl lysine isopeptide (Lys-Gly) (interchain with G-Cter in SUMO2) cross-links involve residues Lys314 and Lys322.

Belongs to the BRX1 family.

It localises to the nucleus. The protein localises to the nucleolus. In terms of biological role, required for biogenesis of the 60S ribosomal subunit. This is Ribosome biogenesis protein BRX1 homolog (BRIX1) from Bos taurus (Bovine).